Consider the following 452-residue polypeptide: Bifunctional protein GlmU (452 aa).

Residues 1-226 (MSLSVVILAA…ATEVEGVNTR (226 aa)) are pyrophosphorylase. UDP-N-acetyl-alpha-D-glucosamine contacts are provided by residues 8 to 11 (LAAG), lysine 22, glutamine 73, 78 to 79 (GT), 100 to 102 (YGD), glycine 137, glutamate 151, asparagine 166, and asparagine 224. Mg(2+) is bound at residue aspartate 102. Asparagine 224 is a binding site for Mg(2+). Residues 227–247 (LQLANLERAYQLKKATELLLS) are linker. The N-acetyltransferase stretch occupies residues 248 to 452 (GVMLRDPNRF…INNWKRPTKK (205 aa)). The UDP-N-acetyl-alpha-D-glucosamine site is built by arginine 330 and lysine 348. Histidine 360 acts as the Proton acceptor in catalysis. Residues tyrosine 363 and asparagine 374 each contribute to the UDP-N-acetyl-alpha-D-glucosamine site. Residues alanine 377, 383–384 (NY), serine 402, alanine 420, and arginine 437 contribute to the acetyl-CoA site.

This sequence in the N-terminal section; belongs to the N-acetylglucosamine-1-phosphate uridyltransferase family. It in the C-terminal section; belongs to the transferase hexapeptide repeat family. Homotrimer. Mg(2+) serves as cofactor.

It localises to the cytoplasm. The enzyme catalyses alpha-D-glucosamine 1-phosphate + acetyl-CoA = N-acetyl-alpha-D-glucosamine 1-phosphate + CoA + H(+). It catalyses the reaction N-acetyl-alpha-D-glucosamine 1-phosphate + UTP + H(+) = UDP-N-acetyl-alpha-D-glucosamine + diphosphate. It functions in the pathway nucleotide-sugar biosynthesis; UDP-N-acetyl-alpha-D-glucosamine biosynthesis; N-acetyl-alpha-D-glucosamine 1-phosphate from alpha-D-glucosamine 6-phosphate (route II): step 2/2. It participates in nucleotide-sugar biosynthesis; UDP-N-acetyl-alpha-D-glucosamine biosynthesis; UDP-N-acetyl-alpha-D-glucosamine from N-acetyl-alpha-D-glucosamine 1-phosphate: step 1/1. The protein operates within bacterial outer membrane biogenesis; LPS lipid A biosynthesis. In terms of biological role, catalyzes the last two sequential reactions in the de novo biosynthetic pathway for UDP-N-acetylglucosamine (UDP-GlcNAc). The C-terminal domain catalyzes the transfer of acetyl group from acetyl coenzyme A to glucosamine-1-phosphate (GlcN-1-P) to produce N-acetylglucosamine-1-phosphate (GlcNAc-1-P), which is converted into UDP-GlcNAc by the transfer of uridine 5-monophosphate (from uridine 5-triphosphate), a reaction catalyzed by the N-terminal domain. The sequence is that of Bifunctional protein GlmU from Psychromonas ingrahamii (strain DSM 17664 / CCUG 51855 / 37).